The sequence spans 235 residues: 7-cyano-7-deazaguanine synthase (235 aa).

ATP is bound at residue 12–22 (FSGGQDSTACL). Zn(2+) contacts are provided by cysteine 200, cysteine 215, cysteine 218, and cysteine 221.

Belongs to the QueC family. Zn(2+) is required as a cofactor.

The catalysed reaction is 7-carboxy-7-deazaguanine + NH4(+) + ATP = 7-cyano-7-deazaguanine + ADP + phosphate + H2O + H(+). The protein operates within purine metabolism; 7-cyano-7-deazaguanine biosynthesis. Catalyzes the ATP-dependent conversion of 7-carboxy-7-deazaguanine (CDG) to 7-cyano-7-deazaguanine (preQ(0)). This chain is 7-cyano-7-deazaguanine synthase, found in Methylibium petroleiphilum (strain ATCC BAA-1232 / LMG 22953 / PM1).